The primary structure comprises 616 residues: Angiotensin-converting enzyme (616 aa).

An N-terminal signal peptide occupies residues 1-23; it reads MNLINFSYLNLLFGAGLFSVLES. A Peptidase M2 domain is found at 27–610; the sequence is LNTESDAKKW…PRAENWMGGK (584 aa). N-linked (GlcNAc...) asparagine glycosylation is found at Asn61 and Asn96. Cys142 and Cys152 form a disulfide bridge. Arg180 and Tyr218 together coordinate chloride. N-linked (GlcNAc...) asparagine glycosylation is present at Asn303. A disulfide bridge links Cys345 with Cys363. His376 lines the Zn(2+) pocket. The active-site Proton acceptor is Glu377. Residues His380 and Glu404 each contribute to the Zn(2+) site. N-linked (GlcNAc...) asparagine glycosylation occurs at Asn428. Chloride-binding residues include Trp478 and Arg482. His506 acts as the Proton donor in catalysis. Arg515 provides a ligand contact to chloride. A disulfide bond links Cys531 and Cys543. Asn535 and Asn573 each carry an N-linked (GlcNAc...) asparagine glycan.

This sequence belongs to the peptidase M2 family. Requires Zn(2+) as cofactor. The cofactor is chloride. In terms of tissue distribution, epithelial cells of the midgut.

The protein resides in the secreted. It localises to the extracellular space. The enzyme catalyses Release of a C-terminal dipeptide, oligopeptide-|-Xaa-Yaa, when Xaa is not Pro, and Yaa is neither Asp nor Glu. Thus, conversion of angiotensin I to angiotensin II, with increase in vasoconstrictor activity, but no action on angiotensin II.. Its activity is regulated as follows. Activated by chloride. Inhibited by captopril and lisinopril, and to a lesser extent by delaprilat. The chain is Angiotensin-converting enzyme (ACE) from Theromyzon tessulatum (Duck leech).